The sequence spans 153 residues: Superoxide dismutase [Cu-Zn] (153 aa).

Asn24 carries N-linked (GlcNAc...) asparagine glycosylation. The Cu cation site is built by His47, His49, and His64. A disulfide bridge connects residues Cys58 and Cys147. Zn(2+) contacts are provided by His64, His72, His81, and Asp84. Residue His121 participates in Cu cation binding. Basic and acidic residues predominate over residues 126–137 (DLGRGGNEESKK). The segment at 126–145 (DLGRGGNEESKKTGNAGPRP) is disordered. Substrate is bound at residue Arg144.

Belongs to the Cu-Zn superoxide dismutase family. As to quaternary structure, homodimer. Requires Cu cation as cofactor. The cofactor is Zn(2+).

It is found in the cytoplasm. The enzyme catalyses 2 superoxide + 2 H(+) = H2O2 + O2. Destroys radicals which are normally produced within the cells and which are toxic to biological systems. This chain is Superoxide dismutase [Cu-Zn], found in Humicola lutea.